Reading from the N-terminus, the 315-residue chain is Glycine--tRNA ligase alpha subunit (315 aa).

This sequence belongs to the class-II aminoacyl-tRNA synthetase family. Tetramer of two alpha and two beta subunits.

It is found in the cytoplasm. It catalyses the reaction tRNA(Gly) + glycine + ATP = glycyl-tRNA(Gly) + AMP + diphosphate. This Ectopseudomonas mendocina (strain ymp) (Pseudomonas mendocina) protein is Glycine--tRNA ligase alpha subunit.